The following is a 555-amino-acid chain: CTP synthase (555 aa).

The tract at residues methionine 1 to isoleucine 265 is amidoligase domain. Serine 13 serves as a coordination point for CTP. Serine 13 is a UTP binding site. ATP is bound by residues serine 14–isoleucine 19 and aspartate 71. Aspartate 71 and glutamate 139 together coordinate Mg(2+). CTP-binding positions include aspartate 146–glutamate 148, lysine 186–glutamine 191, and lysine 222. Residues lysine 186–glutamine 191 and lysine 222 each bind UTP. The Glutamine amidotransferase type-1 domain occupies threonine 290 to alanine 541. Glycine 351 serves as a coordination point for L-glutamine. Residue cysteine 378 is the Nucleophile; for glutamine hydrolysis of the active site. Residues leucine 379–glutamine 382, glutamate 402, and arginine 469 each bind L-glutamine. Catalysis depends on residues histidine 514 and glutamate 516.

The protein belongs to the CTP synthase family. As to quaternary structure, homotetramer.

It catalyses the reaction UTP + L-glutamine + ATP + H2O = CTP + L-glutamate + ADP + phosphate + 2 H(+). The enzyme catalyses L-glutamine + H2O = L-glutamate + NH4(+). It carries out the reaction UTP + NH4(+) + ATP = CTP + ADP + phosphate + 2 H(+). It participates in pyrimidine metabolism; CTP biosynthesis via de novo pathway; CTP from UDP: step 2/2. Allosterically activated by GTP, when glutamine is the substrate; GTP has no effect on the reaction when ammonia is the substrate. The allosteric effector GTP functions by stabilizing the protein conformation that binds the tetrahedral intermediate(s) formed during glutamine hydrolysis. Inhibited by the product CTP, via allosteric rather than competitive inhibition. Its function is as follows. Catalyzes the ATP-dependent amination of UTP to CTP with either L-glutamine or ammonia as the source of nitrogen. Regulates intracellular CTP levels through interactions with the four ribonucleotide triphosphates. This chain is CTP synthase, found in Coxiella burnetii (strain RSA 493 / Nine Mile phase I).